The chain runs to 454 residues: Transmembrane protein adipocyte-associated 1 homolog (454 aa).

N-linked (GlcNAc...) asparagine glycans are attached at residues Asn26 and Asn44. 5 helical membrane-spanning segments follow: residues 80–100 (AILI…TSVI), 113–133 (AFTL…VYSM), 151–171 (IIIK…GLLF), 180–200 (ILIA…VQVI), and 224–244 (FVFW…IMCL). An N-linked (GlcNAc...) asparagine glycan is attached at Asn258. 2 helical membrane passes run 262–282 (FIYC…AALI) and 290–310 (LCFV…IIYF). 2 N-linked (GlcNAc...) asparagine glycosylation sites follow: Asn322 and Asn323. A disordered region spans residues 408-454 (RTGSDDFAHHRDSMLSEPSTGTTTRHLKGLGPQGSLVFEEDPSSLRL). Residues 410 to 421 (GSDDFAHHRDSM) are compositionally biased toward basic and acidic residues. The span at 445 to 454 (FEEDPSSLRL) shows a compositional bias: acidic residues.

This sequence belongs to the UPF0359 family.

It is found in the membrane. In Caenorhabditis briggsae, this protein is Transmembrane protein adipocyte-associated 1 homolog (tpra-1).